A 314-amino-acid chain; its full sequence is Pathogenicity locus probable regulatory protein HrpR (314 aa).

In terms of domain architecture, Sigma-54 factor interaction spans 11–239; sequence TRWNVTALSA…LKSAANAICP (229 aa). Residues 39–46 and 101–110 each bind ATP; these read GETGTGKD and SNGGTLYLDE. Residues 281–300 constitute a DNA-binding region (H-T-H motif); it reads FDAVLEELELPRRTLYHRMK.

Functionally, member of the two-component regulatory system HrpR/HrpS that regulates the activation of the sigma factor hrpL which itself induces the expression of hprD as well as other hrp loci which are involved in plant pathogenicity, hrmA and avr genes. Probably interacts with sigma-54. In Pseudomonas syringae pv. syringae, this protein is Pathogenicity locus probable regulatory protein HrpR (hrpR).